Reading from the N-terminus, the 241-residue chain is Uridylate kinase (241 aa).

12 to 15 (KISG) is an ATP binding site. Residues 20–25 (GDKGNG) form an involved in allosteric activation by GTP region. Glycine 54 serves as a coordination point for UMP. Positions 55 and 59 each coordinate ATP. UMP is bound by residues aspartate 74 and 135 to 142 (TGNPYFST). ATP contacts are provided by asparagine 163, tyrosine 169, and aspartate 172.

This sequence belongs to the UMP kinase family. In terms of assembly, homohexamer.

The protein resides in the cytoplasm. The catalysed reaction is UMP + ATP = UDP + ADP. Its pathway is pyrimidine metabolism; CTP biosynthesis via de novo pathway; UDP from UMP (UMPK route): step 1/1. With respect to regulation, allosterically activated by GTP. Inhibited by UTP. In terms of biological role, catalyzes the reversible phosphorylation of UMP to UDP. This Lactobacillus acidophilus (strain ATCC 700396 / NCK56 / N2 / NCFM) protein is Uridylate kinase.